A 576-amino-acid chain; its full sequence is Nuclear protein localization protein 4 homolog (576 aa).

Disordered regions lie at residues 67-96 (LHLV…NNIS) and 200-219 (QDDN…IKKS). Low complexity predominate over residues 72-94 (NNNNNNNDNKASSGSNNNNNNNN). Positions 208 to 218 (KDNKDNSEIKK) are enriched in basic and acidic residues. One can recognise an MPN domain in the interval 295-430 (GALVDFQSAN…MEAFQVSDQA (136 aa)).

Belongs to the NPL4 family.

The protein operates within protein degradation; proteasomal ubiquitin-dependent pathway. Its function is as follows. May be part of a complex that binds ubiquitinated proteins and that is necessary for the export of misfolded proteins from the ER to the cytoplasm, where they are degraded by the proteasome. This Dictyostelium discoideum (Social amoeba) protein is Nuclear protein localization protein 4 homolog (nploc4).